A 229-amino-acid polypeptide reads, in one-letter code: MANELTWHDVLAEEKQQPYFLNTLQTVASERQSGITVYPPQKDVFNAFRFTELGDVKVVILGQDPYHGPGQAHGLAFSVRPGIAIPPSLLNMYKELENTIPGFTRPGHGYLESWARQGVLLLNTVLTVRAGQAHSHASLGWETFTDKVISLINQHREGVVFLLWGSHAQKKGAIIDKQRHHVLKAPHPSPLSAHRGFFGCNHFVLANQWLEQRGEKPIDWMPVLPAESE.

The active-site Proton acceptor is Asp64.

It belongs to the uracil-DNA glycosylase (UDG) superfamily. UNG family.

The protein localises to the cytoplasm. The enzyme catalyses Hydrolyzes single-stranded DNA or mismatched double-stranded DNA and polynucleotides, releasing free uracil.. Its function is as follows. Excises uracil residues from the DNA which can arise as a result of misincorporation of dUMP residues by DNA polymerase or due to deamination of cytosine. This Escherichia fergusonii (strain ATCC 35469 / DSM 13698 / CCUG 18766 / IAM 14443 / JCM 21226 / LMG 7866 / NBRC 102419 / NCTC 12128 / CDC 0568-73) protein is Uracil-DNA glycosylase.